The chain runs to 532 residues: Probable C4-dicarboxylate sensor kinase (532 aa).

The Cytoplasmic segment spans residues 1-12 (MRLFRQLSIQWK). The helical transmembrane segment at 13–33 (ITILSFGIVAFALMMVSISLL) threads the bilayer. The Extracellular portion of the chain corresponds to 34-175 (GYVTSIKEDE…YADMIQEFWQ (142 aa)). The chain crosses the membrane as a helical span at residues 176-196 (PALLIGLITALFGFWGSWLLA). Residues 197 to 532 (SHIKRQTFNM…FSIYLPKKRG (336 aa)) are Cytoplasmic-facing. One can recognise a PAS domain in the interval 216–279 (VERDASFNAI…PEILSIGKPL (64 aa)). The Histidine kinase domain maps to 315–531 (SDVDRLAEEL…TFSIYLPKKR (217 aa)). His-339 is subject to Phosphohistidine; by autocatalysis.

It localises to the cell membrane. It catalyses the reaction ATP + protein L-histidine = ADP + protein N-phospho-L-histidine.. Member of the two-component regulatory system DctS/DctR. Probably activates DctR by phosphorylation. Essential for expression of dctP. This is Probable C4-dicarboxylate sensor kinase (dctS) from Halalkalibacterium halodurans (strain ATCC BAA-125 / DSM 18197 / FERM 7344 / JCM 9153 / C-125) (Bacillus halodurans).